We begin with the raw amino-acid sequence, 271 residues long: Ribosomal RNA small subunit methyltransferase A (271 aa).

S-adenosyl-L-methionine contacts are provided by His-18, Leu-20, Gly-45, Glu-66, Asp-91, and Asn-113.

This sequence belongs to the class I-like SAM-binding methyltransferase superfamily. rRNA adenine N(6)-methyltransferase family. RsmA subfamily.

The protein resides in the cytoplasm. The enzyme catalyses adenosine(1518)/adenosine(1519) in 16S rRNA + 4 S-adenosyl-L-methionine = N(6)-dimethyladenosine(1518)/N(6)-dimethyladenosine(1519) in 16S rRNA + 4 S-adenosyl-L-homocysteine + 4 H(+). Specifically dimethylates two adjacent adenosines (A1518 and A1519) in the loop of a conserved hairpin near the 3'-end of 16S rRNA in the 30S particle. May play a critical role in biogenesis of 30S subunits. In Baumannia cicadellinicola subsp. Homalodisca coagulata, this protein is Ribosomal RNA small subunit methyltransferase A.